We begin with the raw amino-acid sequence, 249 residues long: NAD kinase (249 aa).

D45 (proton acceptor) is an active-site residue. NAD(+) is bound by residues 45-46 (DG), R50, 110-111 (NE), D138, and 149-154 (SGWGMS).

Belongs to the NAD kinase family. A divalent metal cation is required as a cofactor.

The protein localises to the cytoplasm. The enzyme catalyses NAD(+) + ATP = ADP + NADP(+) + H(+). Involved in the regulation of the intracellular balance of NAD and NADP, and is a key enzyme in the biosynthesis of NADP. Catalyzes specifically the phosphorylation on 2'-hydroxyl of the adenosine moiety of NAD to yield NADP. This is NAD kinase from Saccharolobus islandicus (strain Y.N.15.51 / Yellowstone #2) (Sulfolobus islandicus).